Here is a 744-residue protein sequence, read N- to C-terminus: FNIP repeat-containing protein cigB (744 aa).

FNIP repeat units follow at residues 340 to 376 (FNQK…TVTT), 383 to 422 (FNQK…TVIL), 426 to 462 (FNQK…TVTR), 469 to 508 (FNQK…TITL), 512 to 550 (FNQK…TTVR), 555 to 594 (FNQK…TVIL), 598 to 635 (FNQK…VTTV), 641 to 678 (FNQK…VTTV), and 684 to 723 (FNQK…NVYI).

This Dictyostelium discoideum (Social amoeba) protein is FNIP repeat-containing protein cigB (cigB).